We begin with the raw amino-acid sequence, 450 residues long: Mitochondrial distribution and morphology protein 10 (450 aa).

It belongs to the MDM10 family. As to quaternary structure, component of the ER-mitochondria encounter structure (ERMES) or MDM complex, composed of MMM1, MDM10, MDM12 and MDM34. Associates with the mitochondrial outer membrane sorting assembly machinery SAM(core) complex.

It is found in the mitochondrion outer membrane. Functionally, component of the ERMES/MDM complex, which serves as a molecular tether to connect the endoplasmic reticulum and mitochondria. Components of this complex are involved in the control of mitochondrial shape and protein biogenesis and may function in phospholipid exchange. MDM10 is involved in the late assembly steps of the general translocase of the mitochondrial outer membrane (TOM complex). Functions in the TOM40-specific route of the assembly of outer membrane beta-barrel proteins, including the association of TOM40 with the receptor TOM22 and small TOM proteins. Can associate with the SAM(core) complex as well as the MDM12-MMM1 complex, both involved in late steps of the major beta-barrel assembly pathway, that is responsible for biogenesis of all outer membrane beta-barrel proteins. May act as a switch that shuttles between both complexes and channels precursor proteins into the TOM40-specific pathway. Plays a role in mitochondrial morphology and in the inheritance of mitochondria. The chain is Mitochondrial distribution and morphology protein 10 from Paracoccidioides lutzii (strain ATCC MYA-826 / Pb01) (Paracoccidioides brasiliensis).